A 502-amino-acid chain; its full sequence is ATP synthase subunit alpha (502 aa).

Residues isoleucine 115–threonine 134 are disordered. Residue glycine 169–threonine 176 coordinates ATP.

It belongs to the ATPase alpha/beta chains family. As to quaternary structure, F-type ATPases have 2 components, CF(1) - the catalytic core - and CF(0) - the membrane proton channel. CF(1) has five subunits: alpha(3), beta(3), gamma(1), delta(1), epsilon(1). CF(0) has three main subunits: a(1), b(2) and c(9-12). The alpha and beta chains form an alternating ring which encloses part of the gamma chain. CF(1) is attached to CF(0) by a central stalk formed by the gamma and epsilon chains, while a peripheral stalk is formed by the delta and b chains.

It localises to the cell membrane. It catalyses the reaction ATP + H2O + 4 H(+)(in) = ADP + phosphate + 5 H(+)(out). Its function is as follows. Produces ATP from ADP in the presence of a proton gradient across the membrane. The alpha chain is a regulatory subunit. The protein is ATP synthase subunit alpha of Staphylococcus haemolyticus (strain JCSC1435).